The primary structure comprises 1131 residues: Kinesin-like protein CG14535 (1131 aa).

Polar residues predominate over residues 1 to 11 (MATTSTSNMSR). Positions 1–25 (MATTSTSNMSRNGGFCGALQRAPPP) are disordered. Residues 44 to 396 (KVKVMLRVAD…IQIASRIHRL (353 aa)) enclose the Kinesin motor domain. Disordered stretches follow at residues 472-494 (ALKG…MMMK), 693-753 (DLPD…SRDI), 905-926 (PAYR…QGSL), and 1016-1072 (TSSE…QRHR). The span at 483–494 (SKSASNSPMMMK) shows a compositional bias: low complexity. The segment covering 1016 to 1032 (TSSEAYDSGHDSNSTPR) has biased composition (polar residues).

This sequence belongs to the TRAFAC class myosin-kinesin ATPase superfamily. Kinesin family. KIF26 subfamily.

It is found in the cytoplasm. The protein localises to the cytoskeleton. This Drosophila melanogaster (Fruit fly) protein is Kinesin-like protein CG14535.